The primary structure comprises 303 residues: Vesicle-trafficking protein SEC22c (303 aa).

Residues 1–183 (MSVIFFACVV…EPAPNFRMEP (183 aa)) are Cytoplasmic-facing. The Longin domain occupies 8 to 119 (CVVRVRDGLP…YAFLEFDSII (112 aa)). Residues 184 to 204 (VTALGILSLILNIMCAALNLI) traverse the membrane as a helical segment. Residues 205-223 (RGVHLAEHSLQVAHEEIGN) are Lumenal-facing. The helical transmembrane segment at 224–244 (ILAFLVPFVACIFQCYLYLFY) threads the bilayer. The Cytoplasmic segment spans residues 245–248 (SPAR). Residues 249 to 269 (TMKVVLMLLFICLGNMYLHGL) traverse the membrane as a helical segment. Position 270 (R270) is a topological domain, lumenal. A helical membrane pass occupies residues 271–291 (NLWQILFHIGVAFLSSYQILT). The Cytoplasmic portion of the chain corresponds to 292 to 303 (RQLQEKQSDCGV).

Belongs to the synaptobrevin family. In terms of tissue distribution, ubiquitously expressed.

It is found in the endoplasmic reticulum membrane. Functionally, may be involved in vesicle transport between the ER and the Golgi complex. The chain is Vesicle-trafficking protein SEC22c (SEC22C) from Homo sapiens (Human).